The following is a 345-amino-acid chain: ATP-dependent (S)-NAD(P)H-hydrate dehydratase (345 aa).

The YjeF C-terminal domain maps to 9–332 (ILSLARSMIP…DMVGEVYEEV (324 aa)). (6S)-NADPHX is bound by residues glycine 113 and 170-176 (NVMEFKR). Residues 208-212 (KGPSD) and 241-250 (GGLKRVGGQG) contribute to the ATP site. Residue aspartate 251 coordinates (6S)-NADPHX.

This sequence belongs to the NnrD/CARKD family. Mg(2+) is required as a cofactor.

It is found in the cytoplasm. It carries out the reaction (6S)-NADHX + ATP = ADP + phosphate + NADH + H(+). The catalysed reaction is (6S)-NADPHX + ATP = ADP + phosphate + NADPH + H(+). Functionally, catalyzes the dehydration of the S-form of NAD(P)HX at the expense of ATP, which is converted to ADP. Together with NAD(P)HX epimerase, which catalyzes the epimerization of the S- and R-forms, the enzyme allows the repair of both epimers of NAD(P)HX, a damaged form of NAD(P)H that is a result of enzymatic or heat-dependent hydration. The polypeptide is ATP-dependent (S)-NAD(P)H-hydrate dehydratase (Cryptococcus neoformans var. neoformans serotype D (strain JEC21 / ATCC MYA-565) (Filobasidiella neoformans)).